Here is a 69-residue protein sequence, read N- to C-terminus: UPF0337 protein RB0906 (69 aa).

Belongs to the UPF0337 (CsbD) family.

This chain is UPF0337 protein RB0906, found in Rhizobium meliloti (strain 1021) (Ensifer meliloti).